A 295-amino-acid chain; its full sequence is MTVATAQARTAPQPLAYLKDLVLLSKPRLSGLVMITCAGGMWLAPGQIGAARAVLTVLATAVVVGAANALNCYLERDIDARMRRTRDRPLPAGRVDPFVALGLGIAAPAFAIPILSLAANGLTALLALVALLTYVLVYTPMKQRSATALFVGAVPGAIPPLMGWTSVTGGVDAGGLALFGLLFAWQLPHFLAISLYLREDYQRGGLRMFASVHGERATRLWMALTTILLLPASLALVPLGLAGTGYAITAAVLGLALSAYAISGIGREGGRWARTFFLGTLVHLTVLFVALFLSR.

The next 9 membrane-spanning stretches (helical) occupy residues 31–51, 54–74, 98–118, 121–141, 147–167, 173–193, 220–240, 245–265, and 273–293; these read GLVM…IGAA, VLTV…NCYL, FVAL…LSLA, GLTA…YTPM, TALF…WTSV, AGGL…FLAI, LWMA…VPLG, GYAI…ISGI, and ARTF…ALFL.

It belongs to the UbiA prenyltransferase family. Protoheme IX farnesyltransferase subfamily.

It localises to the cell inner membrane. The catalysed reaction is heme b + (2E,6E)-farnesyl diphosphate + H2O = Fe(II)-heme o + diphosphate. It participates in porphyrin-containing compound metabolism; heme O biosynthesis; heme O from protoheme: step 1/1. Its function is as follows. Converts heme B (protoheme IX) to heme O by substitution of the vinyl group on carbon 2 of heme B porphyrin ring with a hydroxyethyl farnesyl side group. The polypeptide is Protoheme IX farnesyltransferase (Anaeromyxobacter dehalogenans (strain 2CP-C)).